Consider the following 312-residue polypeptide: DNA-directed RNA polymerase subunit alpha (312 aa).

The tract at residues 1-226 (MIEFEKPIIT…EHLNLFTDLT (226 aa)) is alpha N-terminal domain (alpha-NTD). The interval 243-312 (DEKVLDRTIE…DLGLGLKNDK (70 aa)) is alpha C-terminal domain (alpha-CTD).

The protein belongs to the RNA polymerase alpha chain family. In terms of assembly, homodimer. The RNAP catalytic core consists of 2 alpha, 1 beta, 1 beta' and 1 omega subunit. When a sigma factor is associated with the core the holoenzyme is formed, which can initiate transcription.

The catalysed reaction is RNA(n) + a ribonucleoside 5'-triphosphate = RNA(n+1) + diphosphate. Functionally, DNA-dependent RNA polymerase catalyzes the transcription of DNA into RNA using the four ribonucleoside triphosphates as substrates. In Streptococcus pyogenes serotype M3 (strain ATCC BAA-595 / MGAS315), this protein is DNA-directed RNA polymerase subunit alpha.